The sequence spans 384 residues: Stress response protein bis1 (384 aa).

Disordered stretches follow at residues Met1–Gln22 and Ser344–Val384.

It belongs to the ESS2 family. Heterodimer with ish1.

It localises to the nucleus. Its subcellular location is the cytoplasm. The protein resides in the cytoskeleton. The protein localises to the spindle. Has a role in maintaining cell viability during stationary phase induced by stress response. May be involved in pre-mRNA splicing. The sequence is that of Stress response protein bis1 (bis1) from Schizosaccharomyces pombe (strain 972 / ATCC 24843) (Fission yeast).